Here is a 774-residue protein sequence, read N- to C-terminus: MFDTKKVEIQWGGQTLTLETGRVARQADGAVLATLGETVVLCAVTAARSVKEGQDFFPLTVHYQEKYFSSGRIPGGFFKRERGATEKETLVSRLIDRPIRPLFPEGFYNEINVIAQVLSYDGENEPDILAMIAASAALTISGVPFMGPIGAARVGYKDGEYLLNPTDADVAAGDLDLVVAATHDAVMMVESEAKELSEEVMLGAVMFAHKASQDVIKAIIKLAEKSAKDPWEMAPQADLSAAKTKLKKLVGKDITAAYKLTNKSARSSALNEARAKAKEAFADATPQDQMAAIKLVKKLEAEIVRTAILKDGRRIDGRDTRTVRPIVAEAHFLPRAHGSALFTRGETQSISTCTLGTKESEQMIDGLNGLRYEHFMLHYNFPPYSVGEVGRFGAPGRREVGHGKLAWRALHAVLPTKEEFPYTIRLTSDITESNGSSSMATVCGGSLAMMDAGVPIKRPVSGIAMGLILEGKDFAVISDILGDEDHLGDMDFKVAGTSEGITTMQMDIKIAGITEEIFKTALLQAKEGRAHILGEMAKALDHTRTELSAHAPRIETMSVPKDKIRDIIGTGGKIIREIVATTGAKVDIDDDGTVKISSSDTAQIEAARNWIIGIVAEPEVGKIYTGKVVNLVDFGAFVNFMGGKDGLVHVSEIKNERVEKVADALSEGQEVKVKVLEIDNRGKVRLSMRVVDQETGEELPDTRPPREERPRGDRGDRGDRGPRRDGDRRREGGDRGPRRDRGDRGDRPRRERSEGGDEGPAPDFAPAFLTRDDD.

Mg(2+)-binding residues include Asp485 and Asp491. The region spanning 552 to 611 is the KH domain; it reads PRIETMSVPKDKIRDIIGTGGKIIREIVATTGAKVDIDDDGTVKISSSDTAQIEAARNWI. The 69-residue stretch at 621–689 folds into the S1 motif domain; that stretch reads GKIYTGKVVN…NRGKVRLSMR (69 aa). Residues 689-774 are disordered; the sequence is RVVDQETGEE…APAFLTRDDD (86 aa). The segment covering 700–755 has biased composition (basic and acidic residues); that stretch reads PDTRPPREERPRGDRGDRGDRGPRRDGDRRREGGDRGPRRDRGDRGDRPRRERSEG.

It belongs to the polyribonucleotide nucleotidyltransferase family. Mg(2+) serves as cofactor.

The protein localises to the cytoplasm. The enzyme catalyses RNA(n+1) + phosphate = RNA(n) + a ribonucleoside 5'-diphosphate. Its function is as follows. Involved in mRNA degradation. Catalyzes the phosphorolysis of single-stranded polyribonucleotides processively in the 3'- to 5'-direction. This Rhizorhabdus wittichii (strain DSM 6014 / CCUG 31198 / JCM 15750 / NBRC 105917 / EY 4224 / RW1) (Sphingomonas wittichii) protein is Polyribonucleotide nucleotidyltransferase.